Reading from the N-terminus, the 55-residue chain is Large ribosomal subunit protein bL33B (55 aa).

This sequence belongs to the bacterial ribosomal protein bL33 family.

In Rhodococcus jostii (strain RHA1), this protein is Large ribosomal subunit protein bL33B.